Reading from the N-terminus, the 571-residue chain is Septation ring formation regulator EzrA (571 aa).

Topologically, residues 1–3 (MYY) are extracellular. A helical membrane pass occupies residues 4–22 (MLIGFIIVVIAVIGAGYIL). The Cytoplasmic segment spans residues 23–571 (KRKHYQRINE…ASKVSVDDIE (549 aa)). Coiled coils occupy residues 102 to 147 (ATNA…TKEK), 248 to 298 (LAQM…DTLE), 326 to 374 (DALA…ASGE), 400 to 437 (KFAEELRSLRKDELEARDDAERMRRAIITLDRKMERER), and 478 to 529 (RIAE…ENHF).

It belongs to the EzrA family.

The protein localises to the cell membrane. Functionally, negative regulator of FtsZ ring formation; modulates the frequency and position of FtsZ ring formation. Inhibits FtsZ ring formation at polar sites. Interacts either with FtsZ or with one of its binding partners to promote depolymerization. The sequence is that of Septation ring formation regulator EzrA from Listeria monocytogenes serotype 4a (strain HCC23).